The following is a 305-amino-acid chain: L-lactate dehydrogenase (305 aa).

Residues valine 11, aspartate 32, lysine 37, and 76 to 77 (GV) each bind NAD(+). Substrate contacts are provided by residues glutamine 79, arginine 85, and 117–120 (NPVD). Residues 115–117 (ATN) and serine 140 each bind NAD(+). 145–148 (DTAR) provides a ligand contact to substrate. Arginine 150 and histidine 165 together coordinate beta-D-fructose 1,6-bisphosphate. Histidine 172 serves as the catalytic Proton acceptor. At tyrosine 218 the chain carries Phosphotyrosine. Threonine 227 provides a ligand contact to substrate.

This sequence belongs to the LDH/MDH superfamily. LDH family. Homotetramer.

The protein resides in the cytoplasm. The catalysed reaction is (S)-lactate + NAD(+) = pyruvate + NADH + H(+). The protein operates within fermentation; pyruvate fermentation to lactate; (S)-lactate from pyruvate: step 1/1. With respect to regulation, allosterically activated by fructose 1,6-bisphosphate (FBP). Its function is as follows. Catalyzes the conversion of lactate to pyruvate. This Chloroherpeton thalassium (strain ATCC 35110 / GB-78) protein is L-lactate dehydrogenase.